A 360-amino-acid polypeptide reads, in one-letter code: DNA polymerase IV (360 aa).

Residues 8–189 (IIHVDMDCFF…LPLEKIPGVG (182 aa)) form the UmuC domain. Residues Asp-12 and Asp-107 each coordinate Mg(2+). The active site involves Glu-108.

The protein belongs to the DNA polymerase type-Y family. In terms of assembly, monomer. Mg(2+) serves as cofactor.

Its subcellular location is the cytoplasm. The catalysed reaction is DNA(n) + a 2'-deoxyribonucleoside 5'-triphosphate = DNA(n+1) + diphosphate. Functionally, poorly processive, error-prone DNA polymerase involved in untargeted mutagenesis. Copies undamaged DNA at stalled replication forks, which arise in vivo from mismatched or misaligned primer ends. These misaligned primers can be extended by PolIV. Exhibits no 3'-5' exonuclease (proofreading) activity. May be involved in translesional synthesis, in conjunction with the beta clamp from PolIII. This chain is DNA polymerase IV, found in Vibrio cholerae serotype O1 (strain ATCC 39541 / Classical Ogawa 395 / O395).